The chain runs to 132 residues: Phycocyanin PC645 alpha-1 subunit (132 aa).

The (2R,3E)-phycocyanobilin site is built by Asp-54 and Arg-68. Positions 70, 76, 77, and 92 each coordinate mesobiliverdin. The 15,16-dihydrobiliverdin site is built by Pro-123 and Ile-125.

Belongs to the phycoerythrin family. As to quaternary structure, heterotetramer of 2 different alpha chains and 2 identical beta chains which form 2 alpha-beta heterodimers within the heterotetramer. Contains two phycocyanobilin chromophores, one mesobiliverdin chromophore and one 15,16-dihydrobiliverdin chromophore with binding mediated by both the alpha and beta subunits.

The protein localises to the plastid. The protein resides in the chloroplast thylakoid membrane. Light-harvesting photosynthetic tetrapyrrole chromophore-protein from the phycobiliprotein complex. This Chroomonas sp. (strain CCMP270) protein is Phycocyanin PC645 alpha-1 subunit.